The sequence spans 281 residues: Pantothenate synthetase (281 aa).

30–37 (MGNLHLGH) contributes to the ATP binding site. The Proton donor role is filled by H37. Position 61 (Q61) interacts with (R)-pantoate. Position 61 (Q61) interacts with beta-alanine. 149–152 (GRKD) contacts ATP. (R)-pantoate is bound at residue Q155. ATP is bound by residues I178 and 186-189 (MSSR).

Belongs to the pantothenate synthetase family. As to quaternary structure, homodimer.

The protein resides in the cytoplasm. It catalyses the reaction (R)-pantoate + beta-alanine + ATP = (R)-pantothenate + AMP + diphosphate + H(+). The protein operates within cofactor biosynthesis; (R)-pantothenate biosynthesis; (R)-pantothenate from (R)-pantoate and beta-alanine: step 1/1. Catalyzes the condensation of pantoate with beta-alanine in an ATP-dependent reaction via a pantoyl-adenylate intermediate. The sequence is that of Pantothenate synthetase from Shewanella sediminis (strain HAW-EB3).